The primary structure comprises 30 residues: Dermaseptin-J10 (30 aa).

In terms of tissue distribution, expressed by the skin glands.

The protein localises to the secreted. Its function is as follows. Has antimicrobial activity. This is Dermaseptin-J10 from Phasmahyla jandaia (Jandaia leaf frog).